Here is a 2133-residue protein sequence, read N- to C-terminus: Coagulation factor VIII (2133 aa).

Residues 1–19 (MQLELSTCVFLCLLPLGFS) form the signal peptide. 4 Plastocyanin-like domains span residues 20 to 199 (AIRR…LLVC), 207 to 357 (ERTQ…QLRR), 399 to 573 (KTWV…LLIC), and 583 to 730 (NQMM…VYSC). F5/8 type A domains follow at residues 20-357 (AIRR…QLRR) and 399-730 (KTWV…VYSC). An intrachain disulfide couples Cys-173 to Cys-199. N-linked (GlcNAc...) asparagine glycosylation is found at Asn-233 and Asn-259. Residues Cys-547 and Cys-573 are joined by a disulfide bond. Asn-601 carries N-linked (GlcNAc...) asparagine glycosylation. Tyr-737, Tyr-738, and Tyr-742 each carry sulfotyrosine. Disordered stretches follow at residues 760 to 790 (SFAQ…LDPQ) and 804 to 914 (PSGD…PHPQ). The interval 760–1599 (SFAQNSRPPS…LISYPDDQEQ (840 aa)) is b. Residues 761–780 (FAQNSRPPSASQKQFQTITS) are compositionally biased toward polar residues. Basic and acidic residues-rich tracts occupy residues 853 to 862 (LRPELHHSAE) and 868 to 878 (EPEKELKKLDS). Low complexity predominate over residues 879-888 (KMSSSSDLLK). Residues 889–900 (TSPTIPSDTLSA) are compositionally biased toward polar residues. 3 N-linked (GlcNAc...) asparagine glycosylation sites follow: Asn-929, Asn-985, and Asn-1025. Residues 1042-1078 (LGKNPLSSERGPSPELLTSSGSGKSVKGQSSGQGRIR) form a disordered region. The segment covering 1060-1075 (SSGSGKSVKGQSSGQG) has biased composition (low complexity). Asn-1111 carries an N-linked (GlcNAc...) asparagine glycan. The tract at residues 1160-1179 (PSVEGFDGGSHAPVPQDSRS) is disordered. 5 N-linked (GlcNAc...) asparagine glycosylation sites follow: Asn-1181, Asn-1208, Asn-1245, Asn-1265, and Asn-1335. The segment at 1200-1221 (EAPLEAPGNRTGPGPRSAVPRR) is disordered. Disordered regions lie at residues 1358–1391 (LNKV…KSTA) and 1406–1441 (ESNH…APKP). Basic and acidic residues predominate over residues 1378–1387 (KEWESLEKSP). N-linked (GlcNAc...) asparagine glycosylation is found at Asn-1408 and Asn-1611. 2 consecutive Plastocyanin-like domains span residues 1495–1659 (RTRH…LLIC) and 1669–1822 (GRQV…SKEC). The 328-residue stretch at 1495 to 1822 (RTRHYFIAAV…TTFLVYSKEC (328 aa)) folds into the F5/8 type A 3 domain. Disulfide bonds link Cys-1633-Cys-1659, Cys-1822-Cys-1970, and Cys-1975-Cys-2127. F5/8 type C domains follow at residues 1822–1970 (CQAP…LMGC) and 1975–2127 (CSMP…VLGC). Residue Asn-1919 is glycosylated (N-linked (GlcNAc...) asparagine).

This sequence belongs to the multicopper oxidase family. Interacts with vWF. vWF binding is essential for the stabilization of F8 in circulation. In terms of processing, proteolytically cleaved by cathepsin CTSG to produce a partially activated form.

The protein localises to the secreted. It is found in the extracellular space. Its function is as follows. Factor VIII, along with calcium and phospholipid, acts as a cofactor for factor IXa when it converts factor X to the activated form, factor Xa. This Sus scrofa (Pig) protein is Coagulation factor VIII (F8).